We begin with the raw amino-acid sequence, 168 residues long: UPF0262 protein BRADO6636 (168 aa).

Belongs to the UPF0262 family.

This is UPF0262 protein BRADO6636 from Bradyrhizobium sp. (strain ORS 278).